Consider the following 798-residue polypeptide: Nuclear cap-binding protein subunit 1 (798 aa).

The MIF4G domain maps to 28–241 (EKKLQGVIGK…SLSAQIEALR (214 aa)). A disordered region spans residues 663 to 686 (NKIKEEDDEESDIKMDEDETKEEK). A compositionally biased stretch (acidic residues) spans 668–682 (EDDEESDIKMDEDET).

It belongs to the NCBP1 family. Component of the nuclear cap-binding complex (CBC), a heterodimer composed of ncbp-1 and ncbp-1 that interacts with m7GpppG-capped RNA.

The protein resides in the nucleus. Its function is as follows. Component of the cap-binding complex (CBC), which binds cotranscriptionally to the 5'-cap of pre-mRNAs and is involved in various processes such as pre-mRNA splicing and RNA-mediated gene silencing (RNAi). The CBC complex is involved in miRNA-mediated RNA interference and is required for primary microRNAs (miRNAs) processing. In the CBC complex, ncbp-1 does not bind directly capped RNAs (m7GpppG-capped RNA) but is required to stabilize the movement of the N-terminal loop of ncbp-2 and lock the CBC into a high affinity cap-binding state with the cap structure. This is Nuclear cap-binding protein subunit 1 (ncbp-1) from Caenorhabditis elegans.